The sequence spans 312 residues: Polyprenyl transferase atnF (312 aa).

Asn9 carries an N-linked (GlcNAc...) asparagine glycan. 9 helical membrane passes run 30 to 50 (LHTIEGLSTASIGWLALFFYA), 64 to 84 (FIGIFATYQMTHCVFCLWNDI), 111 to 131 (AMWVFVLGVFASMGVTYWLLG), 132 to 152 (ADVTLTMVPIWVLSFIYPLCK), 154 to 174 (IIWAPQVVLGLTMALCVLPPW), 185 to 205 (GLLPASLFGAIFCWLVYLDLI), 229 to 249 (YLKAGLTVLGVLQVVCFVLAA), 255 to 275 (GFLLWVFGIAVWSASVPWSIM), and 288 to 308 (IFLVNAILGIYMAAVSGLNVS).

It belongs to the UbiA prenyltransferase family. Mg(2+) is required as a cofactor.

It localises to the membrane. It functions in the pathway secondary metabolite biosynthesis; terpenoid biosynthesis. In terms of biological role, polyprenyl transferase; part of the gene cluster that mediates the biosynthesis of the meroterpenoids arthripenoids. The pathway begins with the HR-PKS atnH that catalyzes two chain-extension steps to form a reduced triketide, which then primes the SAT domain in the NR-PKS atnG to initiate three more cycles of extension to give a linear hexaketide corresponding to the polyketide part of arthripenoids. The FAD-dependent monooxygenase atnJ then performs an oxidative decarboxylation at C11 of the atnH/atnG product, via an electrophilic aromatic hydroxylation with concomitant ipso-decarboxylation. The membrane-bound polyprenyl transferase atnF then introduces a farnesyl group before the FAD-dependent monooxygenase atnK functions as the first epoxidase on terminal C12'-C13' olefin, followed by a second epoxidation on C7'-C8' catalyzed by atnA. The terpene cyclase/mutase atnI then initiates the sequential tricyclic ring formation through protonation of the terminal epoxide and catalyzes the regioselective and stereoselective 6/6/6-tricyclic ring formation. The cytochrome P450 monooxygenase atnM is responsible for hydroxylating both C1' and C10'. The next steps may involve ketoreduction and acetyl transfer by the ketoreductase atnB and the acetyltransferase atnC, and lead to the production of arthripenoid B, the final biosynthetic product of the atn cluster. The hydroquinone moiety in arthripenoid B is prone to undergo spontaneous oxidation to afford a benzoquinone compound, a key intermediate for generating structure diversity. For instance, addition of a cysteine followed by ring contraction gives arthripenoid A, tautomerization gives the main product arthripenoid C, addition of a molecular of water or amine affords arthripenoid D or E, respectively, and loss of one water forms arthripenoid F. This Arthrinium sp protein is Polyprenyl transferase atnF.